Reading from the N-terminus, the 1371-residue chain is DNA-directed RNA polymerase subunit beta'' (1371 aa).

Zn(2+) contacts are provided by cysteine 220, cysteine 293, cysteine 300, and cysteine 303.

The protein belongs to the RNA polymerase beta' chain family. RpoC2 subfamily. In plastids the minimal PEP RNA polymerase catalytic core is composed of four subunits: alpha, beta, beta', and beta''. When a (nuclear-encoded) sigma factor is associated with the core the holoenzyme is formed, which can initiate transcription. The cofactor is Zn(2+).

The protein resides in the plastid. It is found in the chloroplast. It catalyses the reaction RNA(n) + a ribonucleoside 5'-triphosphate = RNA(n+1) + diphosphate. In terms of biological role, DNA-dependent RNA polymerase catalyzes the transcription of DNA into RNA using the four ribonucleoside triphosphates as substrates. The protein is DNA-directed RNA polymerase subunit beta'' of Lobularia maritima (Sweet alyssum).